The chain runs to 362 residues: MAQIFNFSSGPAMLPVEVLKQAQQELRDWNGLGTSVMEVSHRGKEFIQVAEEAEKDFRDLLNVPSNYKVLFCHGGGRGQFAAVPLNILGDKTTADYVDAGYWAASAIKEAKKYCTPNVFDAKVTVDGLRAVKPMREWQLSDNAAYMHYCPNETIDGIAIDETPDFGKDVVVAADFSSTILSRPIDVSRYGVIYAGAQKNIGPAGLTIVIVREDLLGKANVACPSILDYSILNDNGSMFNTPPTFAWYLSGLVFKWLKANGGVAEMDKINQQKAELLYGVIDNSDFYRNDVAKANRSRMNVPFQLADSALDKLFLEESFAAGLHALKGHRVVGGMRASIYNAMPLEGVKALTDFMVEFERRHG.

Residues S9 and R42 each coordinate L-glutamate. Pyridoxal 5'-phosphate is bound by residues 76 to 77, W102, T153, D174, and Q197; that span reads GR. Residue K198 is modified to N6-(pyridoxal phosphate)lysine. 239-240 contacts pyridoxal 5'-phosphate; that stretch reads NT.

The protein belongs to the class-V pyridoxal-phosphate-dependent aminotransferase family. SerC subfamily. In terms of assembly, homodimer. Pyridoxal 5'-phosphate is required as a cofactor.

The protein resides in the cytoplasm. It catalyses the reaction O-phospho-L-serine + 2-oxoglutarate = 3-phosphooxypyruvate + L-glutamate. The enzyme catalyses 4-(phosphooxy)-L-threonine + 2-oxoglutarate = (R)-3-hydroxy-2-oxo-4-phosphooxybutanoate + L-glutamate. The protein operates within amino-acid biosynthesis; L-serine biosynthesis; L-serine from 3-phospho-D-glycerate: step 2/3. It functions in the pathway cofactor biosynthesis; pyridoxine 5'-phosphate biosynthesis; pyridoxine 5'-phosphate from D-erythrose 4-phosphate: step 3/5. Functionally, catalyzes the reversible conversion of 3-phosphohydroxypyruvate to phosphoserine and of 3-hydroxy-2-oxo-4-phosphonooxybutanoate to phosphohydroxythreonine. The polypeptide is Phosphoserine aminotransferase (Escherichia coli O157:H7).